A 286-amino-acid polypeptide reads, in one-letter code: uncharacterized protein (286 aa).

The disordered stretch occupies residues 1–47; sequence MAIPFLHKGGSDDSTHHHTHDYDHHNHDHHGHDHHSHDSSSNSSSEA. Basic and acidic residues predominate over residues 9 to 26; it reads GGSDDSTHHHTHDYDHHN. 93-100 serves as a coordination point for GTP; sequence GPVGSGKT.

This sequence belongs to the SIMIBI class G3E GTPase family. UreG subfamily.

The protein resides in the cytoplasm. Its subcellular location is the nucleus. Functionally, probably facilitates nickel incorporation. This is an uncharacterized protein from Schizosaccharomyces pombe (strain 972 / ATCC 24843) (Fission yeast).